A 294-amino-acid polypeptide reads, in one-letter code: Survival motor neuron protein (294 aa).

A compositionally biased stretch (gly residues) spans 1 to 12; that stretch reads MAMSSGGSGGGV. A disordered region spans residues 1 to 32; sequence MAMSSGGSGGGVPEQEDSVLFRRGTGQSDDSD. An N-acetylalanine modification is found at Ala2. 3 positions are modified to phosphoserine; by PKA: Ser4, Ser5, and Ser8. Position 25 is a phosphothreonine (Thr25). The tract at residues 26-51 is interacts with GEMIN2; it reads GQSDDSDIWDDTALIKAYDKAVASFK. Residues Ser28 and Ser31 each carry the phosphoserine modification. Lys51 is covalently cross-linked (Glycyl lysine isopeptide (Lys-Gly) (interchain with G-Cter in SUMO2)). The segment at 59 to 88 is disordered; the sequence is ICETSGKPKTTPKRKPAKKNKSQKKNTAAS. Residues 68 to 82 show a composition bias toward basic residues; sequence TTPKRKPAKKNKSQK. Thr69 carries the phosphothreonine modification. At Thr85 the chain carries Phosphothreonine; by PKA. The 61-residue stretch at 91–151 folds into the Tudor domain; sequence QWKVGDKCSA…LSPICEVANN (61 aa). The segment at 97–209 is required for interaction with RPP20/POP7; that stretch reads KCSAIWSEDG…MPGPRLGPGK (113 aa). Positions 156–166 are enriched in low complexity; that stretch reads AQENENESQVS. Positions 156–222 are disordered; it reads AQENENESQV…KFNGPPPPPP (67 aa). Ser187 carries the phosphoserine; by PKA modification. The segment covering 194 to 204 has biased composition (pro residues); the sequence is LPPPPPMPGPR. The span at 206–215 shows a compositional bias: low complexity; that stretch reads GPGKPGLKFN. Residue Lys209 forms a Glycyl lysine isopeptide (Lys-Gly) (interchain with G-Cter in SUMO2) linkage. The P2 (binding site for SNRPB) stretch occupies residues 240 to 267; sequence PPIIPPPPPICPDSLDDADALGSMLISW. The tract at residues 252–280 is involved in homooligomerization; it reads DSLDDADALGSMLISWYMSGYHTGYYMGF. Residues 279 to 294 form a required for interaction with SYNCRIP region; that stretch reads GFRQNQKEGRCSHSLN.

This sequence belongs to the SMN family. Homooligomer; may form higher order homooligomers in the dimer to octamer range. Part of the core SMN complex that contains SMN1, GEMIN2/SIP1, DDX20/GEMIN3, GEMIN4, GEMIN5, GEMIN6, GEMIN7, GEMIN8 and STRAP/UNRIP. Part of the SMN-Sm complex that contains SMN1, GEMIN2/SIP1, DDX20/GEMIN3, GEMIN4, GEMIN5, GEMIN6, GEMIN7, GEMIN8, STRAP/UNRIP and the Sm proteins SNRPB, SNRPD1, SNRPD2, SNRPD3, SNRPE, SNRPF and SNRPG. Component of an import snRNP complex composed of KPNB1, RNUT1, SMN1 and ZNF259. Interacts with DDX20, FBL, NOLA1, RNUT1, SYNCRIP and with several spliceosomal snRNP core Sm proteins, including SNRPB, SNRPD1, SNRPD2, SNRPD3, SNRPE and ILF3. Interacts with GEMIN2; the interaction is direct. Interacts with GEMIN3; the interaction is direct. Interacts with GEMIN8; the interaction is direct. Interacts with SNRPB; the interaction is direct. Interacts (via Tudor domain) with SNRPD1 (via C-terminus); the interaction is direct. Interacts with SNRPD2; the interaction is direct. Interacts (via Tudor domain) with SNRPD3 (via C-terminus); the interaction is direct. Interacts with SNRPE; the interaction is direct. Interacts with OSTF1, LSM10, LSM11 and RPP20/POP7. Interacts (via C-terminal region) with ZPR1 (via C-terminal region). Interacts (via Tudor domain) with COIL. Interacts with SETX; recruits SETX to POLR2A. Interacts with POLR2A (via the C-terminal domain (CTD)). Interacts with PRMT5. Interacts with XRN2. Interacts (via C-terminus) with FMR1 (via C-terminus); the interaction is direct and occurs in a RNA-independent manner. Interacts (via Tudor domain) with SF3B2 ('Arg-508'-methylated form). Interacts with WRAP53/TCAB1. Interacts (via Tudor domain) with ELAVL4 in an RNA-independent manner; the interaction is required for localization of ELAVL4 to RNA granules. Interacts with FRG1. As to quaternary structure, does not homooligomerize. Does not interact with SNRPB. Expressed in a wide variety of tissues. Expressed at high levels in brain, kidney and liver, moderate levels in skeletal and cardiac muscle, and low levels in fibroblasts and lymphocytes. Also seen at high levels in spinal cord. Present in osteoclasts and mononuclear cells (at protein level).

Its subcellular location is the nucleus. The protein localises to the gem. It localises to the cajal body. It is found in the cytoplasm. The protein resides in the cytoplasmic granule. Its subcellular location is the perikaryon. The protein localises to the cell projection. It localises to the neuron projection. It is found in the axon. The protein resides in the myofibril. Its subcellular location is the sarcomere. The protein localises to the z line. In terms of biological role, the SMN complex catalyzes the assembly of small nuclear ribonucleoproteins (snRNPs), the building blocks of the spliceosome, and thereby plays an important role in the splicing of cellular pre-mRNAs. Most spliceosomal snRNPs contain a common set of Sm proteins SNRPB, SNRPD1, SNRPD2, SNRPD3, SNRPE, SNRPF and SNRPG that assemble in a heptameric protein ring on the Sm site of the small nuclear RNA to form the core snRNP (Sm core). In the cytosol, the Sm proteins SNRPD1, SNRPD2, SNRPE, SNRPF and SNRPG are trapped in an inactive 6S pICln-Sm complex by the chaperone CLNS1A that controls the assembly of the core snRNP. To assemble core snRNPs, the SMN complex accepts the trapped 5Sm proteins from CLNS1A forming an intermediate. Within the SMN complex, SMN1 acts as a structural backbone and together with GEMIN2 it gathers the Sm complex subunits. Binding of snRNA inside 5Sm ultimately triggers eviction of the SMN complex, thereby allowing binding of SNRPD3 and SNRPB to complete assembly of the core snRNP. Ensures the correct splicing of U12 intron-containing genes that may be important for normal motor and proprioceptive neurons development. Also required for resolving RNA-DNA hybrids created by RNA polymerase II, that form R-loop in transcription terminal regions, an important step in proper transcription termination. May also play a role in the metabolism of small nucleolar ribonucleoprotein (snoRNPs). The protein is Survival motor neuron protein (SMN1) of Homo sapiens (Human).